A 111-amino-acid polypeptide reads, in one-letter code: Large ribosomal subunit protein uL22 (111 aa).

Belongs to the universal ribosomal protein uL22 family. As to quaternary structure, part of the 50S ribosomal subunit.

Its function is as follows. This protein binds specifically to 23S rRNA; its binding is stimulated by other ribosomal proteins, e.g. L4, L17, and L20. It is important during the early stages of 50S assembly. It makes multiple contacts with different domains of the 23S rRNA in the assembled 50S subunit and ribosome. The globular domain of the protein is located near the polypeptide exit tunnel on the outside of the subunit, while an extended beta-hairpin is found that lines the wall of the exit tunnel in the center of the 70S ribosome. The sequence is that of Large ribosomal subunit protein uL22 from Legionella pneumophila (strain Lens).